Here is a 145-residue protein sequence, read N- to C-terminus: D-aminoacyl-tRNA deacylase (145 aa).

The Gly-cisPro motif, important for rejection of L-amino acids signature appears at 137–138 (GP).

It belongs to the DTD family. Homodimer.

It localises to the cytoplasm. It carries out the reaction glycyl-tRNA(Ala) + H2O = tRNA(Ala) + glycine + H(+). The catalysed reaction is a D-aminoacyl-tRNA + H2O = a tRNA + a D-alpha-amino acid + H(+). An aminoacyl-tRNA editing enzyme that deacylates mischarged D-aminoacyl-tRNAs. Also deacylates mischarged glycyl-tRNA(Ala), protecting cells against glycine mischarging by AlaRS. Acts via tRNA-based rather than protein-based catalysis; rejects L-amino acids rather than detecting D-amino acids in the active site. By recycling D-aminoacyl-tRNA to D-amino acids and free tRNA molecules, this enzyme counteracts the toxicity associated with the formation of D-aminoacyl-tRNA entities in vivo and helps enforce protein L-homochirality. This is D-aminoacyl-tRNA deacylase from Yersinia enterocolitica serotype O:8 / biotype 1B (strain NCTC 13174 / 8081).